We begin with the raw amino-acid sequence, 340 residues long: Guanine nucleotide-binding protein G(I)/G(S)/G(T) subunit beta-1 (340 aa).

WD repeat units lie at residues 53–83 (GHLA…IIWD), 95–125 (LRSS…PIYN), 141–170 (GHTG…ALWD), 182–212 (GHTG…KLWD), 224–254 (GHES…RLFD), 268–298 (NIIC…NVWD), and 310–340 (GHDN…KIWN).

Belongs to the WD repeat G protein beta family. In terms of assembly, g proteins are composed of 3 units, alpha, beta and gamma.

Its function is as follows. Guanine nucleotide-binding proteins (G proteins) are involved as a modulator or transducer in various transmembrane signaling systems. The beta and gamma chains are required for the GTPase activity, for replacement of GDP by GTP, and for G protein-effector interaction. This is Guanine nucleotide-binding protein G(I)/G(S)/G(T) subunit beta-1 (gnb1) from Xenopus laevis (African clawed frog).